We begin with the raw amino-acid sequence, 283 residues long: Elongation factor Ts (283 aa).

The involved in Mg(2+) ion dislocation from EF-Tu stretch occupies residues 80–83 (TDFV).

This sequence belongs to the EF-Ts family.

The protein resides in the cytoplasm. Its function is as follows. Associates with the EF-Tu.GDP complex and induces the exchange of GDP to GTP. It remains bound to the aminoacyl-tRNA.EF-Tu.GTP complex up to the GTP hydrolysis stage on the ribosome. This chain is Elongation factor Ts, found in Pectobacterium atrosepticum (strain SCRI 1043 / ATCC BAA-672) (Erwinia carotovora subsp. atroseptica).